Reading from the N-terminus, the 144-residue chain is Maximins 10/H15 (144 aa).

A signal peptide spans 1–18 (MNFKYIVAVSFLIASAYA). The propeptide occupies 19–43 (RSVQNDEQSLSQRDVLEEESLREIR). At S70 the chain carries Serine amide. Residues 74 to 123 (TAEDHEVMKRLEAVMRDLDSLDYPEEATERETRGFNQEEIANLFTKKEKR) constitute a propeptide that is removed on maturation. Residue L143 is modified to Leucine amide.

It belongs to the bombinin family. As to expression, expressed by the skin glands.

The protein localises to the secreted. In terms of biological role, maximin-10 shows antimicrobial activity against bacteria and against the fungus C.albicans. It has little hemolytic activity. Its function is as follows. Maximin-H15 shows antimicrobial activity against bacteria and against the fungus C.albicans. Shows strong hemolytic activity. This chain is Maximins 10/H15, found in Bombina maxima (Giant fire-bellied toad).